Reading from the N-terminus, the 197-residue chain is Recombination protein RecR (197 aa).

The C4-type zinc finger occupies 56-71 (CPVCGTLDTRAPCSIC). In terms of domain architecture, Toprim spans 79–174 (TLICVVRDVA…TVSGLAQGVP (96 aa)).

The protein belongs to the RecR family.

Its function is as follows. May play a role in DNA repair. It seems to be involved in an RecBC-independent recombinational process of DNA repair. It may act with RecF and RecO. This chain is Recombination protein RecR, found in Rhodospirillum rubrum (strain ATCC 11170 / ATH 1.1.1 / DSM 467 / LMG 4362 / NCIMB 8255 / S1).